The primary structure comprises 345 residues: S-adenosylmethionine:tRNA ribosyltransferase-isomerase (345 aa).

The protein belongs to the QueA family. As to quaternary structure, monomer.

It localises to the cytoplasm. The catalysed reaction is 7-aminomethyl-7-carbaguanosine(34) in tRNA + S-adenosyl-L-methionine = epoxyqueuosine(34) in tRNA + adenine + L-methionine + 2 H(+). It participates in tRNA modification; tRNA-queuosine biosynthesis. Transfers and isomerizes the ribose moiety from AdoMet to the 7-aminomethyl group of 7-deazaguanine (preQ1-tRNA) to give epoxyqueuosine (oQ-tRNA). This Anaeromyxobacter dehalogenans (strain 2CP-C) protein is S-adenosylmethionine:tRNA ribosyltransferase-isomerase.